A 121-amino-acid chain; its full sequence is Small ribosomal subunit protein uS13 (121 aa).

Residues 88–121 (GMRHRRGLPVRGQHTKNNARTRKGKAVAIANKKK) form a disordered region.

It belongs to the universal ribosomal protein uS13 family. As to quaternary structure, part of the 30S ribosomal subunit. Forms a loose heterodimer with protein S19. Forms two bridges to the 50S subunit in the 70S ribosome.

Its function is as follows. Located at the top of the head of the 30S subunit, it contacts several helices of the 16S rRNA. In the 70S ribosome it contacts the 23S rRNA (bridge B1a) and protein L5 of the 50S subunit (bridge B1b), connecting the 2 subunits; these bridges are implicated in subunit movement. Contacts the tRNAs in the A and P-sites. The protein is Small ribosomal subunit protein uS13 of Limosilactobacillus reuteri subsp. reuteri (strain JCM 1112) (Lactobacillus reuteri).